A 119-amino-acid chain; its full sequence is Small ribosomal subunit protein uS10 (119 aa).

Alanine 2 carries the N-acetylalanine modification. Residue lysine 4 forms a Glycyl lysine isopeptide (Lys-Gly) (interchain with G-Cter in ubiquitin) linkage. At lysine 8 the chain carries N6-succinyllysine; alternate. A Glycyl lysine isopeptide (Lys-Gly) (interchain with G-Cter in ubiquitin); alternate cross-link involves residue lysine 8. At threonine 9 the chain carries Phosphothreonine. N6-acetyllysine is present on residues lysine 34 and lysine 75. Serine 93 is subject to Phosphoserine.

Belongs to the universal ribosomal protein uS10 family. Component of the 40S small ribosomal subunit. In terms of processing, polyubiquitinated by ZNF598 via 'Lys-63'-linked ubiquitin chains when a ribosome has stalled, initiating the ribosome quality control (RQC) pathway to degrade the potentially detrimental aberrant nascent polypeptide. Deubiquitinated by OTUD3 and USP21, antagonizing ZNF598 activity. Ufmylated by UFL1.

The protein resides in the cytoplasm. Its function is as follows. Component of the small ribosomal subunit. The ribosome is a large ribonucleoprotein complex responsible for the synthesis of proteins in the cell. This Sus scrofa (Pig) protein is Small ribosomal subunit protein uS10 (RPS20).